The chain runs to 109 residues: Thiosulfate sulfurtransferase GlpE (109 aa).

Positions 16–104 constitute a Rhodanese domain; sequence REQGAVVVDV…WRTTFPSETA (89 aa). Residue Cys-64 is the Cysteine persulfide intermediate of the active site.

Belongs to the GlpE family.

It is found in the cytoplasm. It carries out the reaction thiosulfate + hydrogen cyanide = thiocyanate + sulfite + 2 H(+). The enzyme catalyses thiosulfate + [thioredoxin]-dithiol = [thioredoxin]-disulfide + hydrogen sulfide + sulfite + 2 H(+). Transferase that catalyzes the transfer of sulfur from thiosulfate to thiophilic acceptors such as cyanide or dithiols. May function in a CysM-independent thiosulfate assimilation pathway by catalyzing the conversion of thiosulfate to sulfite, which can then be used for L-cysteine biosynthesis. This is Thiosulfate sulfurtransferase GlpE from Pseudomonas fluorescens (strain Pf0-1).